The following is a 786-amino-acid chain: Wall-associated receptor kinase-like 17 (786 aa).

An N-terminal signal peptide occupies residues 1–30; the sequence is MSYKNTNNSHLILFKLLLLLILYSADLTAS. Residues 31–369 are Extracellular-facing; the sequence is SSCRSECGGC…YRCVGDKTKA (339 aa). 5 N-linked (GlcNAc...) asparagine glycosylation sites follow: asparagine 69, asparagine 122, asparagine 160, asparagine 165, and asparagine 274. The tract at residues 301-362 is atypical EGF-like; sequence CICDYTMSII…CVNFEGGYRC (62 aa). Disulfide bonds link cysteine 303–cysteine 318, cysteine 340–cysteine 353, and cysteine 347–cysteine 362. The helical transmembrane segment at 370-390 threads the bilayer; sequence IMIGAGTGFGVLVLVGGVWWL. Residues 391-786 are Cytoplasmic-facing; it reads RKFLVKRRMA…VEPLNPLLTW (396 aa). The residue at position 433 (threonine 433) is a Phosphothreonine. Positions 444-719 constitute a Protein kinase domain; the sequence is FSENRVLGHG…REVFTELERI (276 aa). Residues 450 to 458 and lysine 472 each bind ATP; that span reads LGHGGQGTV. A Phosphotyrosine modification is found at tyrosine 517. The active-site Proton acceptor is aspartate 570. A phosphothreonine mark is found at threonine 604 and threonine 609. Tyrosine 617 carries the post-translational modification Phosphotyrosine. Residues 766 to 775 show a composition bias toward low complexity; it reads SSIVASPPSS. Residues 766 to 786 form a disordered region; sequence SSIVASPPSSDVEPLNPLLTW.

This sequence belongs to the protein kinase superfamily. Ser/Thr protein kinase family.

It localises to the membrane. It catalyses the reaction L-seryl-[protein] + ATP = O-phospho-L-seryl-[protein] + ADP + H(+). The catalysed reaction is L-threonyl-[protein] + ATP = O-phospho-L-threonyl-[protein] + ADP + H(+). Its function is as follows. Serine/threonine-protein kinase that may function as a signaling receptor of extracellular matrix component. The chain is Wall-associated receptor kinase-like 17 (WAKL17) from Arabidopsis thaliana (Mouse-ear cress).